The chain runs to 303 residues: MNSIGLVTKLSDPMAIRATSELTEWLNKQHRRVTVTAEAAKAANISPKLAAIKPLEDIGEGQDLVIVLGGDGTFIGAARDVLRWKVPVLGVNMGRLGFLTEVSYDEMYDNLKEVFAGHYNVEDRMMLTAFIRRESGEVLSHHVLNDVVAHKGHLARMMEFQVSINGQHVFTSRADGLIVATPTGSTGYSLSAGGPIIHPRLDTIIINPICPHTLSNRPIAVPGDGQISFRLTQNEPDRLLTLDGQTGVPLLDGDEIVIRKSDRSLRVIHSPDRNYYDILRKKLHWAETVGTKRDLSLRPADDR.

Catalysis depends on aspartate 71, which acts as the Proton acceptor. Residues 71-72 (DG), 145-146 (ND), arginine 156, arginine 173, aspartate 175, 186-191 (TGYSLS), and glutamine 245 each bind NAD(+).

This sequence belongs to the NAD kinase family. A divalent metal cation is required as a cofactor.

The protein resides in the cytoplasm. It carries out the reaction NAD(+) + ATP = ADP + NADP(+) + H(+). Its function is as follows. Involved in the regulation of the intracellular balance of NAD and NADP, and is a key enzyme in the biosynthesis of NADP. Catalyzes specifically the phosphorylation on 2'-hydroxyl of the adenosine moiety of NAD to yield NADP. This is NAD kinase from Magnetococcus marinus (strain ATCC BAA-1437 / JCM 17883 / MC-1).